The sequence spans 119 residues: Protein Wnt-4 (119 aa).

A lipid anchor (O-palmitoleoyl serine; by PORCN) is attached at S1. 2 cysteine pairs are disulfide-bonded: C69/C100 and C85/C95. Residue N86 is glycosylated (N-linked (GlcNAc...) asparagine).

The protein belongs to the Wnt family. In terms of processing, palmitoleoylation is required for efficient binding to frizzled receptors. Depalmitoleoylation leads to Wnt signaling pathway inhibition.

It is found in the secreted. The protein resides in the extracellular space. Its subcellular location is the extracellular matrix. Its function is as follows. Ligand for members of the frizzled family of seven transmembrane receptors. Plays an important role in embryonic development. This chain is Protein Wnt-4 (WNT-4), found in Sceloporus occidentalis (Western fence lizard).